A 79-amino-acid polypeptide reads, in one-letter code: DNA-directed RNA polymerase subunit omega (79 aa).

It belongs to the RNA polymerase subunit omega family. As to quaternary structure, the RNAP catalytic core consists of 2 alpha, 1 beta, 1 beta' and 1 omega subunit. When a sigma factor is associated with the core the holoenzyme is formed, which can initiate transcription.

It catalyses the reaction RNA(n) + a ribonucleoside 5'-triphosphate = RNA(n+1) + diphosphate. Promotes RNA polymerase assembly. Latches the N- and C-terminal regions of the beta' subunit thereby facilitating its interaction with the beta and alpha subunits. The sequence is that of DNA-directed RNA polymerase subunit omega from Kosmotoga olearia (strain ATCC BAA-1733 / DSM 21960 / TBF 19.5.1).